The primary structure comprises 409 residues: Putative competence-damage inducible protein (409 aa).

Belongs to the CinA family.

In Clostridium botulinum (strain Loch Maree / Type A3), this protein is Putative competence-damage inducible protein.